A 410-amino-acid chain; its full sequence is Protein TIC 214 (410 aa).

The next 6 helical transmembrane spans lie at 22 to 42 (FVFGLICGSLLGTSMNVGSFI), 61 to 81 (GSAISETFFLFLILFGYIGVI), 87 to 107 (LEPSLTFIITVFCADTIIGFL), 131 to 151 (AVIVFGNPGSTWGATSLITSI), 161 to 181 (LFLFGVFLGIFVIGCGIGFLI), and 210 to 230 (LALCILILSTIYYHWQVYIGL).

It belongs to the TIC214 family. Part of the Tic complex.

It is found in the plastid. The protein localises to the chloroplast inner membrane. In terms of biological role, involved in protein precursor import into chloroplasts. May be part of an intermediate translocation complex acting as a protein-conducting channel at the inner envelope. This Mesostigma viride (Green alga) protein is Protein TIC 214.